Here is a 246-residue protein sequence, read N- to C-terminus: Sugar fermentation stimulation protein homolog (246 aa).

Belongs to the SfsA family.

The chain is Sugar fermentation stimulation protein homolog from Prochlorococcus marinus (strain MIT 9215).